The following is a 1197-amino-acid chain: Sensor protein EvgS (1197 aa).

The first 21 residues, 1–21 (MKFLPYIFLLCCGLWSTISFA), serve as a signal peptide directing secretion. Residues 22–325 (DEDYIEYRGI…SMTDENGSVR (304 aa)) lie on the Cytoplasmic side of the membrane. The helical transmembrane segment at 326–346 (GVMGDILNIITLQTGLNFSPI) threads the bilayer. Residues 347–537 (TVSHNIHAGT…TWDLYSEQFY (191 aa)) lie on the Periplasmic side of the membrane. The helical transmembrane segment at 538-558 (IVTTLSVLLVGSSLLWGFYLL) threads the bilayer. Topologically, residues 559–1197 (RSVRRRKVIQ…EIAVFCQKND (639 aa)) are cytoplasmic. The 221-residue stretch at 718–938 (TMSHEIRTPI…TFTITIPVEI (221 aa)) folds into the Histidine kinase domain. His721 bears the Phosphohistidine; by autocatalysis mark. The 115-residue stretch at 960-1074 (SILIADDHPT…VLKTHLSQLH (115 aa)) folds into the Response regulatory domain. At Asp1009 the chain carries 4-aspartylphosphate. The HPt domain occupies 1098–1197 (DLQLMQEILM…EIAVFCQKND (100 aa)). His1137 carries the phosphohistidine modification.

Activation requires a sequential transfer of a phosphate group from a His in the primary transmitter domain, to an Asp in the receiver domain and to a His in the secondary transmitter domain.

The protein localises to the cell inner membrane. The enzyme catalyses ATP + protein L-histidine = ADP + protein N-phospho-L-histidine.. Its function is as follows. Member of the two-component regulatory system EvgS/EvgA. Phosphorylates EvgA via a four-step phosphorelay in response to environmental signals. This chain is Sensor protein EvgS (evgS), found in Escherichia coli (strain K12).